A 1956-amino-acid polypeptide reads, in one-letter code: Sodium channel protein type 10 subunit alpha (1956 aa).

The Cytoplasmic segment spans residues 1-125 (MELPFASVGT…FNLIRRTAIK (125 aa)). The segment at 31-54 (HRAAKKARTKHRGQEDKGEKPRPQ) is disordered. Residues 32–41 (RAAKKARTKH) show a composition bias toward basic residues. Basic and acidic residues predominate over residues 42 to 54 (RGQEDKGEKPRPQ). One copy of the I repeat lies at 116-404 (FNLIRRTAIK…VTMAYEEQSQ (289 aa)). A helical membrane pass occupies residues 126–149 (VSVHSWFSIFITITILVNCVCMTR). Over 150–154 (TDLPE) the chain is Extracellular. A helical transmembrane segment spans residues 155 to 174 (KVEYVFTVIYTFEALIKILA). The Cytoplasmic segment spans residues 175 to 187 (RGFCLNEFTYLRD). Residues 188-206 (PWNWLDFSVITLAYVGAAI) form a helical membrane-spanning segment. The Extracellular segment spans residues 207–212 (DLRGIS). Residues 213 to 232 (GLRTFRVLRALKTVSVIPGL) traverse the membrane as a helical; Voltage-sensor segment. The Cytoplasmic portion of the chain corresponds to 233–248 (KVIVGALIHSVRKLAD). A helical transmembrane segment spans residues 249 to 272 (VTILTVFCLSVFALVGLQLFKGNL). At 273 to 340 (KNKCIRNGTD…PDFNYTSFDS (68 aa)) the chain is on the extracellular side. Cys-276 and Cys-318 are joined by a disulfide. N-linked (GlcNAc...) asparagine glycans are attached at residues Asn-279, Asn-288, Asn-311, and Asn-334. Positions 341 to 365 (FAWAFLSLFRLMTQDSWERLYQQTL) form an intramembrane region, pore-forming. The Extracellular segment spans residues 366-372 (RASGKMY). Residues 373 to 398 (MVFFVLVIFLGSFYLVNLILAVVTMA) traverse the membrane as a helical segment. The Cytoplasmic segment spans residues 399 to 658 (YEEQSQATIA…KWRKFKMALF (260 aa)). Phosphoserine is present on residues Ser-440, Ser-443, Ser-466, and Ser-478. Residues 441 to 453 (LQSHSGSPLASKN) are compositionally biased toward polar residues. Disordered stretches follow at residues 441–484 (LQSH…YNQR) and 537–581 (LLGR…AGAP). The span at 475–484 (SPQSDPYNQR) shows a compositional bias: polar residues. 2 positions are modified to phosphoserine: Ser-611 and Ser-614. An II repeat occupies 646–910 (CCPKWRKFKM…EDDGEVNNLQ (265 aa)). A helical membrane pass occupies residues 659–683 (ELVTDPFAELTITLCIVVNTVFMAM). Residues 684 to 694 (EHYPMTDAFDA) lie on the Extracellular side of the membrane. A helical transmembrane segment spans residues 695-718 (MLQAGNIVFTVFFTMEMAFKIIAF). The Cytoplasmic portion of the chain corresponds to 719 to 726 (DPYYYFQK). A helical membrane pass occupies residues 727 to 746 (KWNIFDCVIVTVSLLELSAS). Topologically, residues 747–752 (KKGSLS) are extracellular. Residues 753-772 (VLRTFRLLRVFKLAKSWPTL) traverse the membrane as a helical; Voltage-sensor segment. Over 773–788 (NTLIKIIGNSVGALGN) the chain is Cytoplasmic. The helical transmembrane segment at 789–809 (LTFILAIIVFIFALVGKQLLS) threads the bilayer. The Extracellular segment spans residues 810 to 833 (EDYGCRKDGVSVWNGEKLRWHMCD). Residues 834–854 (FFHSFLVVFRILCGEWIENMW) constitute an intramembrane region (pore-forming). Residues 855–863 (VCMEVSQKS) are Extracellular-facing. A disulfide bond links Cys-856 and Cys-865. Residues 864–889 (ICLILFLTVMVLGNLVVLNLFIALLL) traverse the membrane as a helical segment. The Cytoplasmic segment spans residues 890–1148 (NSFSADNLTA…GWQVRKTCYR (259 aa)). The disordered stretch occupies residues 1008 to 1094 (DELEEDMEQA…SEGSTVDCPD (87 aa)). The stretch at 1141 to 1450 (QVRKTCYRIV…KKYYNAMKKL (310 aa)) is one III repeat. The helical transmembrane segment at 1149 to 1172 (IVEHSWFESFIIFMILLSSGALAF) threads the bilayer. The Extracellular portion of the chain corresponds to 1173–1185 (EDNYLEEKPRVKS). A helical membrane pass occupies residues 1186 to 1211 (VLEYTDRVFTFIFVFEMLLKWVAYGF). Residues 1212 to 1217 (KKYFTN) lie on the Cytoplasmic side of the membrane. Residues 1218-1239 (AWCWLDFLIVNISLTSLIAKIL) form a helical membrane-spanning segment. Residues 1240–1243 (EYSD) lie on the Extracellular side of the membrane. A helical; Voltage-sensor membrane pass occupies residues 1244-1265 (VASIKALRTLRALRPLRALSRF). Residues 1266-1284 (EGMRVVVDALVGAIPSIMN) are Cytoplasmic-facing. A helical membrane pass occupies residues 1285 to 1312 (VLLVCLIFWLIFSIMGVNLFAGKFSKCV). At 1313 to 1354 (DTRNNPFSNVNSTMVNNKSECHNQNSTGHFFWVNVKVNFDNV) the chain is on the extracellular side. Asn-1323, Asn-1329, and Asn-1337 each carry an N-linked (GlcNAc...) asparagine glycan. An intramembrane region (pore-forming) is located at residues 1355 to 1376 (AMGYLALLQVATFKGWMDIMYA). At 1377–1392 (AVDSGEINSQPNWENN) the chain is on the extracellular side. The chain crosses the membrane as a helical span at residues 1393–1419 (LYMYLYFVVFIIFGGFFTLNLFVGVII). Residues 1420-1472 (DNFNQQKKKLGGQDIFMTEEQKKYYNAMKKLGSKKPQKPIPRPLNKYQGFVFD) lie on the Cytoplasmic side of the membrane. Ser-1452 carries the post-translational modification Phosphoserine; by PKC. The IV repeat unit spans residues 1459–1758 (IPRPLNKYQG…WEKFDPEATQ (300 aa)). Residues 1473–1496 (IVTRQAFDIIIMVLICLNMITMMV) form a helical membrane-spanning segment. The Extracellular portion of the chain corresponds to 1497-1507 (ETDEQGEEKTK). Residues 1508-1531 (VLGRINQFFVAVFTGECVMKMFAL) traverse the membrane as a helical segment. Residues 1532 to 1537 (RQYYFT) lie on the Cytoplasmic side of the membrane. Residues 1538–1561 (NGWNVFDFIVVILSIGSLLFSAIL) traverse the membrane as a helical segment. Topologically, residues 1562 to 1573 (KSLENYFSPTLF) are extracellular. A helical; Voltage-sensor transmembrane segment spans residues 1574–1595 (RVIRLARIGRILRLIRAAKGIR). At 1596–1610 (TLLFALMMSLPALFN) the chain is on the cytoplasmic side. The helical transmembrane segment at 1611–1633 (IGLLLFLVMFIYSIFGMASFANV) threads the bilayer. Residues 1634-1647 (VDEAGIDDMFNFKT) lie on the Extracellular side of the membrane. The pore-forming intramembrane region spans 1648 to 1670 (FGNSMLCLFQITTSAGWDGLLSP). The Extracellular portion of the chain corresponds to 1671–1698 (ILNTGPPYCDPNLPNSNGSRGNCGSPAV). An N-linked (GlcNAc...) asparagine glycan is attached at Asn-1687. Residues 1699-1723 (GIIFFTTYIIISFLIVVNMYIAVIL) traverse the membrane as a helical segment. Residues 1724 to 1956 (ENFNVATEES…AKEGNSPGPQ (233 aa)) are Cytoplasmic-facing. An IQ domain is found at 1852-1881 (EDLSATVIQKAYRSYMLHRSLTLSNTLHVP). The tract at residues 1906-1956 (DKSETASATSFPPSYDSVTRGLSDRANINPSSSMQNEDEVAAKEGNSPGPQ) is disordered. Polar residues predominate over residues 1931 to 1940 (ANINPSSSMQ).

Belongs to the sodium channel (TC 1.A.1.10) family. Nav1.8/SCN10A subfamily. As to quaternary structure, the channel consists of an ion conducting pore forming alpha-subunit regulated by one or more associated auxiliary subunits SCN1B, SCN2B and SCN3B; electrophysiological properties may vary depending on the type of the associated beta subunits. Found in a number of complexes with PRX, DYNLT1 and PDZD2. Interacts with proteins such as FSTL1, PRX, DYNLT1, PDZD2, S100A10 and many others. Interacts with NEDD4 and NEDD4L. Ubiquitinated by NEDD4L; which promotes its endocytosis. Post-translationally, phosphorylation at Ser-1452 by PKC in a highly conserved cytoplasmic loop slows inactivation of the sodium channel and reduces peak sodium currents. In terms of processing, lacks the cysteine which covalently binds the conotoxin GVIIJ. This cysteine (position 815) is speculated in other sodium channel subunits alpha to be implied in covalent binding with the sodium channel subunit beta-2 or beta-4. In terms of tissue distribution, expressed in dorsal root ganglia, trigeminal ganglia, nodose ganglia and sciatic nerve.

The protein localises to the cell membrane. It catalyses the reaction Na(+)(in) = Na(+)(out). Tetrodotoxin-resistant channel that mediates the voltage-dependent sodium ion permeability of excitable membranes. Assuming opened or closed conformations in response to the voltage difference across the membrane, the protein forms a sodium-selective channel through which sodium ions may pass in accordance with their electrochemical gradient. Plays a role in neuropathic pain mechanisms. The protein is Sodium channel protein type 10 subunit alpha of Rattus norvegicus (Rat).